We begin with the raw amino-acid sequence, 535 residues long: CTP synthase (535 aa).

The segment at 1–267 (MTKYIFVTGG…DQIVCDHLKL (267 aa)) is amidoligase domain. CTP is bound at residue serine 13. Serine 13 contacts UTP. 14–19 (SLGKGI) contributes to the ATP binding site. Position 54 (tyrosine 54) interacts with L-glutamine. Aspartate 71 is an ATP binding site. Residues aspartate 71 and glutamate 141 each contribute to the Mg(2+) site. CTP is bound by residues 148 to 150 (DIE), 188 to 193 (KTKPTQ), and lysine 224. UTP contacts are provided by residues 188–193 (KTKPTQ) and lysine 224. 240 to 242 (RDA) is an ATP binding site. Residues 292–534 (KIALVGKYVE…VKASITNKES (243 aa)) form the Glutamine amidotransferase type-1 domain. Residue glycine 354 coordinates L-glutamine. The active-site Nucleophile; for glutamine hydrolysis is the cysteine 381. Residues 382–385 (LGMQ), glutamate 405, and arginine 462 contribute to the L-glutamine site. Residues histidine 507 and glutamate 509 contribute to the active site.

It belongs to the CTP synthase family. Homotetramer.

It carries out the reaction UTP + L-glutamine + ATP + H2O = CTP + L-glutamate + ADP + phosphate + 2 H(+). The catalysed reaction is L-glutamine + H2O = L-glutamate + NH4(+). It catalyses the reaction UTP + NH4(+) + ATP = CTP + ADP + phosphate + 2 H(+). It functions in the pathway pyrimidine metabolism; CTP biosynthesis via de novo pathway; CTP from UDP: step 2/2. Its activity is regulated as follows. Allosterically activated by GTP, when glutamine is the substrate; GTP has no effect on the reaction when ammonia is the substrate. The allosteric effector GTP functions by stabilizing the protein conformation that binds the tetrahedral intermediate(s) formed during glutamine hydrolysis. Inhibited by the product CTP, via allosteric rather than competitive inhibition. Catalyzes the ATP-dependent amination of UTP to CTP with either L-glutamine or ammonia as the source of nitrogen. Regulates intracellular CTP levels through interactions with the four ribonucleotide triphosphates. In Bacillus thuringiensis subsp. konkukian (strain 97-27), this protein is CTP synthase.